The following is a 153-amino-acid chain: Small ribosomal subunit protein uS9 (153 aa).

The tract at residues 122–153 (KKAGFLTRDPRSTERKKYGLKKARKAPQYSKR) is disordered. Over residues 129 to 138 (RDPRSTERKK) the composition is skewed to basic and acidic residues. Over residues 139–153 (YGLKKARKAPQYSKR) the composition is skewed to basic residues.

It belongs to the universal ribosomal protein uS9 family.

This Mycobacterium leprae (strain TN) protein is Small ribosomal subunit protein uS9 (rpsI).